We begin with the raw amino-acid sequence, 370 residues long: Chaperone protein DnaJ (370 aa).

The region spanning 6–70 is the J domain; the sequence is DYYEVLGVQR…EKRSMYDRFG (65 aa). The segment at 128-208 adopts a CR-type zinc-finger fold; the sequence is GVEKTIEFRR…CRGEGRVRQT (81 aa). 8 residues coordinate Zn(2+): Cys141, Cys144, Cys158, Cys161, Cys182, Cys185, Cys196, and Cys199. 4 CXXCXGXG motif repeats span residues 141-148, 158-165, 182-189, and 196-203; these read CPACRGSG, CPKCGGLG, CDMCRGEG, and CRECRGEG.

Belongs to the DnaJ family. In terms of assembly, homodimer. It depends on Zn(2+) as a cofactor.

Its subcellular location is the cytoplasm. In terms of biological role, participates actively in the response to hyperosmotic and heat shock by preventing the aggregation of stress-denatured proteins and by disaggregating proteins, also in an autonomous, DnaK-independent fashion. Unfolded proteins bind initially to DnaJ; upon interaction with the DnaJ-bound protein, DnaK hydrolyzes its bound ATP, resulting in the formation of a stable complex. GrpE releases ADP from DnaK; ATP binding to DnaK triggers the release of the substrate protein, thus completing the reaction cycle. Several rounds of ATP-dependent interactions between DnaJ, DnaK and GrpE are required for fully efficient folding. Also involved, together with DnaK and GrpE, in the DNA replication of plasmids through activation of initiation proteins. In Roseiflexus sp. (strain RS-1), this protein is Chaperone protein DnaJ.